The primary structure comprises 92 residues: Putative pterin-4-alpha-carbinolamine dehydratase (92 aa).

The protein belongs to the pterin-4-alpha-carbinolamine dehydratase family.

The catalysed reaction is (4aS,6R)-4a-hydroxy-L-erythro-5,6,7,8-tetrahydrobiopterin = (6R)-L-erythro-6,7-dihydrobiopterin + H2O. The protein is Putative pterin-4-alpha-carbinolamine dehydratase of Cereibacter sphaeroides (strain ATCC 17023 / DSM 158 / JCM 6121 / CCUG 31486 / LMG 2827 / NBRC 12203 / NCIMB 8253 / ATH 2.4.1.) (Rhodobacter sphaeroides).